A 495-amino-acid polypeptide reads, in one-letter code: Serine/threonine protein phosphatase 2A 57 kDa regulatory subunit B' alpha isoform (495 aa).

Over residues 1 to 13 the composition is skewed to basic residues; the sequence is MFKKIMKGANRKA. Disordered stretches follow at residues 1–61 and 462–495; these read MFKK…AATT and QAKSKQVEEQRQNRWRRLDEAVEEREREDPMITS. The segment covering 49–61 has biased composition (polar residues); the sequence is VPSSPNSMAAATT.

This sequence belongs to the phosphatase 2A regulatory subunit B56 family. In terms of assembly, PP2A consists of a common heteromeric enzyme, composed of a catalytic subunit (subunits C), a constant regulatory subunit (subunit A), and a variety of regulatory subunits such as subunits B (the R2/B/PR55/B55, R3/B''/PR72/PR130/PR59 and R5/B'/B56 families). Interacts with BZR1. Interacts with BRI1. Interacts with SRK2E/OST1. As to expression, expressed ubiquitously, higher levels in leaves.

It is found in the nucleus. Its subcellular location is the cytoplasm. Functionally, the B regulatory subunit may modulate substrate selectivity and catalytic activity, and may also direct the localization of the catalytic enzyme to a particular subcellular compartment. Required for the formation of the PP2A holoenzyme that positively regulates brassinosteroid signaling by dephosphorylating and activating BZR1. This chain is Serine/threonine protein phosphatase 2A 57 kDa regulatory subunit B' alpha isoform (B'ALPHA), found in Arabidopsis thaliana (Mouse-ear cress).